The following is a 607-amino-acid chain: Dolichyl-diphosphooligosaccharide--protein glycosyltransferase subunit 1 (607 aa).

The first 23 residues, 1 to 23 (MEAPAAGLFLLLLLGTWAPAPGS), serve as a signal peptide directing secretion. The Lumenal segment spans residues 24-438 (ASSEAPPLIN…TFNKVLMLQE (415 aa)). Lys-187 is subject to N6-acetyllysine. N-linked (GlcNAc...) asparagine glycosylation occurs at Asn-299. The chain crosses the membrane as a helical span at residues 439-457 (PLLVVAAFYILFFTVIIYV). Over 458-607 (RLDFSITKDP…TKIDHILDAL (150 aa)) the chain is Cytoplasmic. Residue Lys-538 is modified to N6-acetyllysine; alternate. A Glycyl lysine isopeptide (Lys-Gly) (interchain with G-Cter in SUMO2); alternate cross-link involves residue Lys-538.

This sequence belongs to the OST1 family. In terms of assembly, component of the oligosaccharyltransferase (OST) complex. OST exists in two different complex forms which contain common core subunits RPN1, RPN2, OST48, OST4, DAD1 and TMEM258, either STT3A or STT3B as catalytic subunits, and form-specific accessory subunits. STT3A complex assembly occurs through the formation of 3 subcomplexes. Subcomplex 1 contains RPN1 and TMEM258, subcomplex 2 contains the STT3A-specific subunits STT3A, DC2/OSTC, and KCP2 as well as the core subunit OST4, and subcomplex 3 contains RPN2, DAD1, and OST48. The STT3A complex can form stable complexes with the Sec61 complex or with both the Sec61 and TRAP complexes. Interacts with TMEM35A/NACHO. Ubiquitinated by the ECS(ASB11) complex. Ubiquitinated by RNF128, leading to degradation in a proteasome/lysosome-dependent manner. Post-translationally, ufmylated by UFL1 in response to endoplasmic reticulum stress, promoting reticulophagy of endoplasmic reticulum sheets. Expressed in all tissues tested.

Its subcellular location is the endoplasmic reticulum membrane. The protein resides in the melanosome. It functions in the pathway protein modification; protein glycosylation. Functionally, subunit of the oligosaccharyl transferase (OST) complex that catalyzes the initial transfer of a defined glycan (Glc(3)Man(9)GlcNAc(2) in eukaryotes) from the lipid carrier dolichol-pyrophosphate to an asparagine residue within an Asn-X-Ser/Thr consensus motif in nascent polypeptide chains, the first step in protein N-glycosylation. N-glycosylation occurs cotranslationally and the complex associates with the Sec61 complex at the channel-forming translocon complex that mediates protein translocation across the endoplasmic reticulum (ER). All subunits are required for a maximal enzyme activity. The polypeptide is Dolichyl-diphosphooligosaccharide--protein glycosyltransferase subunit 1 (Homo sapiens (Human)).